The chain runs to 326 residues: N-acetyl-gamma-glutamyl-phosphate reductase (326 aa).

The active site involves cysteine 155.

It belongs to the NAGSA dehydrogenase family. Type 1 subfamily.

Its subcellular location is the cytoplasm. It catalyses the reaction N-acetyl-L-glutamate 5-semialdehyde + phosphate + NADP(+) = N-acetyl-L-glutamyl 5-phosphate + NADPH + H(+). Its pathway is amino-acid biosynthesis; L-arginine biosynthesis; N(2)-acetyl-L-ornithine from L-glutamate: step 3/4. In terms of biological role, catalyzes the NADPH-dependent reduction of N-acetyl-5-glutamyl phosphate to yield N-acetyl-L-glutamate 5-semialdehyde. In Shewanella baltica (strain OS223), this protein is N-acetyl-gamma-glutamyl-phosphate reductase.